A 100-amino-acid polypeptide reads, in one-letter code: Aspartyl/glutamyl-tRNA(Asn/Gln) amidotransferase subunit C (100 aa).

Belongs to the GatC family. Heterotrimer of A, B and C subunits.

It carries out the reaction L-glutamyl-tRNA(Gln) + L-glutamine + ATP + H2O = L-glutaminyl-tRNA(Gln) + L-glutamate + ADP + phosphate + H(+). The enzyme catalyses L-aspartyl-tRNA(Asn) + L-glutamine + ATP + H2O = L-asparaginyl-tRNA(Asn) + L-glutamate + ADP + phosphate + 2 H(+). Functionally, allows the formation of correctly charged Asn-tRNA(Asn) or Gln-tRNA(Gln) through the transamidation of misacylated Asp-tRNA(Asn) or Glu-tRNA(Gln) in organisms which lack either or both of asparaginyl-tRNA or glutaminyl-tRNA synthetases. The reaction takes place in the presence of glutamine and ATP through an activated phospho-Asp-tRNA(Asn) or phospho-Glu-tRNA(Gln). The protein is Aspartyl/glutamyl-tRNA(Asn/Gln) amidotransferase subunit C of Rickettsia bellii (strain OSU 85-389).